The sequence spans 231 residues: Large ribosomal subunit protein uL1 (231 aa).

It belongs to the universal ribosomal protein uL1 family. In terms of assembly, part of the 50S ribosomal subunit.

Its function is as follows. Binds directly to 23S rRNA. The L1 stalk is quite mobile in the ribosome, and is involved in E site tRNA release. Protein L1 is also a translational repressor protein, it controls the translation of the L11 operon by binding to its mRNA. The sequence is that of Large ribosomal subunit protein uL1 from Agrobacterium fabrum (strain C58 / ATCC 33970) (Agrobacterium tumefaciens (strain C58)).